Here is a 318-residue protein sequence, read N- to C-terminus: MEITFLGTSSGVPTRARNVSSVALRLPQRAEVWLFDCGEGTQHQLLRSDIKTSQLRRIFITHLHGDHIFGLMGLLASCGLAGNAQPVDLYGPPGLKDYIQACSKYSHTHFGNRVQVYTVEPGLVYEDEEFTVTCDLLKHRIPAFGYRIAEKDRTGRFDVEKAKSLGIPPGRIYGQLKKGETVTLTDGRVIRGQDLCGPTEAGRKFAYCTDTVFCETAIELAQGVDVLIHEATFAHQDAELAFDRLHSTSTMAAQVALAAGVNLLIMTHFSPRYAPGNPLDVTNLLQEARAIFPHTKLAYDFFNYEIPRHRSDHLVEVS.

Zn(2+)-binding residues include H62, H64, D66, H67, H139, D210, and H268. D66 functions as the Proton acceptor in the catalytic mechanism.

This sequence belongs to the RNase Z family. In terms of assembly, homodimer. Requires Zn(2+) as cofactor.

The catalysed reaction is Endonucleolytic cleavage of RNA, removing extra 3' nucleotides from tRNA precursor, generating 3' termini of tRNAs. A 3'-hydroxy group is left at the tRNA terminus and a 5'-phosphoryl group is left at the trailer molecule.. Its function is as follows. Zinc phosphodiesterase, which displays some tRNA 3'-processing endonuclease activity. Probably involved in tRNA maturation, by removing a 3'-trailer from precursor tRNA. This is Ribonuclease Z from Gloeothece citriformis (strain PCC 7424) (Cyanothece sp. (strain PCC 7424)).